The following is a 110-amino-acid chain: NADH-quinone oxidoreductase subunit K (110 aa).

3 helical membrane passes run 13–33 (LNHY…GLFM), 41–61 (ILMS…AFSV), and 73–93 (IIIL…LLIY).

It belongs to the complex I subunit 4L family. NDH-1 is composed of 14 different subunits. Subunits NuoA, H, J, K, L, M, N constitute the membrane sector of the complex.

The protein resides in the cell inner membrane. It carries out the reaction a quinone + NADH + 5 H(+)(in) = a quinol + NAD(+) + 4 H(+)(out). Functionally, NDH-1 shuttles electrons from NADH, via FMN and iron-sulfur (Fe-S) centers, to quinones in the respiratory chain. The immediate electron acceptor for the enzyme in this species is believed to be ubiquinone. Couples the redox reaction to proton translocation (for every two electrons transferred, four hydrogen ions are translocated across the cytoplasmic membrane), and thus conserves the redox energy in a proton gradient. In Rickettsia prowazekii (strain Madrid E), this protein is NADH-quinone oxidoreductase subunit K.